The following is a 247-amino-acid chain: DNA repair protein RecO (247 aa).

The protein belongs to the RecO family.

Its function is as follows. Involved in DNA repair and RecF pathway recombination. This Brucella abortus (strain 2308) protein is DNA repair protein RecO.